Reading from the N-terminus, the 388-residue chain is 2-Hydroxyacid oxidase (388 aa).

A disordered region spans residues 1–21 (MENQFKNNNNSSSIETSNQFS). The region spanning 26–384 (NRLDSFVSVS…NNSIIWDQNK (359 aa)) is the FMN hydroxy acid dehydrogenase domain. A glyoxylate-binding site is contributed by Tyr-52. FMN-binding positions include 105-107 (PWA), Ser-134, 156-158 (QLY), and Thr-184. Tyr-158 is a glyoxylate binding site. Arg-193 lines the glyoxylate pocket. The FMN site is built by Lys-255 and Ser-277. His-279 and Arg-282 together coordinate glyoxylate. His-279 (proton acceptor) is an active-site residue. Residues 310–314 (DGGIR) and 333–334 (GR) contribute to the FMN site.

It belongs to the FMN-dependent alpha-hydroxy acid dehydrogenase family. Homotetramer. FMN serves as cofactor.

It carries out the reaction glycolate + O2 = glyoxylate + H2O2. It catalyses the reaction a (2S)-2-hydroxycarboxylate + O2 = a 2-oxocarboxylate + H2O2. Catalyzes the oxidation of glycolate to glyoxylate, with a reduction of O2 to H2O2. May use other 2-hydroxyacids as substrates. This Dictyostelium discoideum (Social amoeba) protein is 2-Hydroxyacid oxidase (haox).